The following is a 21-amino-acid chain: LDTDLQGTMPEVYASERAAFL.

It is found in the secreted. Its subcellular location is the cell wall. It localises to the S-layer. Its function is as follows. The S-layer is a paracrystalline mono-layered assembly of proteins which coat the surface of bacteria. The sequence is that of S-layer protein 2 from Bacillus thuringiensis subsp. konkukian.